We begin with the raw amino-acid sequence, 88 residues long: DNA-directed RNA polymerase subunit omega (88 aa).

This sequence belongs to the RNA polymerase subunit omega family. In terms of assembly, the RNAP catalytic core consists of 2 alpha, 1 beta, 1 beta' and 1 omega subunit. When a sigma factor is associated with the core the holoenzyme is formed, which can initiate transcription.

The catalysed reaction is RNA(n) + a ribonucleoside 5'-triphosphate = RNA(n+1) + diphosphate. Promotes RNA polymerase assembly. Latches the N- and C-terminal regions of the beta' subunit thereby facilitating its interaction with the beta and alpha subunits. The protein is DNA-directed RNA polymerase subunit omega of Anaeromyxobacter dehalogenans (strain 2CP-1 / ATCC BAA-258).